A 1551-amino-acid chain; its full sequence is UDP-glucose:glycoprotein glucosyltransferase 1 (1551 aa).

The N-terminal stretch at 1-42 (MCSRGDANTADAAAARRVTGLRYNMRLLIALALPCLFSLAEA) is a signal peptide. 3 N-linked (GlcNAc...) asparagine glycosylation sites follow: N269, N536, and N1228. The interval 1244 to 1551 (KAEEVKQDKD…QEGSQKHEEL (308 aa)) is glucosyltransferase. S1277 is modified (phosphoserine). Residues 1531–1551 (KELGTLHTEETQEGSQKHEEL) form a disordered region. The Prevents secretion from ER signature appears at 1548–1551 (HEEL).

The protein belongs to the glycosyltransferase 8 family. Monomer as well as in a tight complex with SELENOF. Interacts with METTL23. Part of a large chaperone multiprotein complex comprising DNAJB11, HSP90B1, HSPA5, HYOU, PDIA2, PDIA4, PDIA6, PPIB, SDF2L1, UGGT1 and very small amounts of ERP29, but not, or at very low levels, CALR nor CANX. Ca(2+) serves as cofactor. Mn(2+) is required as a cofactor.

It is found in the endoplasmic reticulum lumen. Its subcellular location is the endoplasmic reticulum-Golgi intermediate compartment. The catalysed reaction is N(4)-(alpha-D-Man-(1-&gt;2)-alpha-D-Man-(1-&gt;2)-alpha-D-Man-(1-&gt;3)-[alpha-D-Man-(1-&gt;2)-alpha-D-Man-(1-&gt;3)-[alpha-D-Man-(1-&gt;2)-alpha-D-Man-(1-&gt;6)]-alpha-D-Man-(1-&gt;6)]-beta-D-Man-(1-&gt;4)-beta-D-GlcNAc-(1-&gt;4)-beta-D-GlcNAc)-L-asparaginyl-[protein] (N-glucan mannose isomer 9A1,2,3B1,2,3) + UDP-alpha-D-glucose = N(4)-(alpha-D-Glc-(1-&gt;3)-alpha-D-Man-(1-&gt;2)-alpha-D-Man-(1-&gt;2)-alpha-D-Man-(1-&gt;3)-[alpha-D-Man-(1-&gt;2)-alpha-D-Man-(1-&gt;3)-[alpha-D-Man-(1-&gt;2)-alpha-D-Man-(1-&gt;6)]-alpha-D-Man-(1-&gt;6)]-beta-D-Man-(1-&gt;4)-beta-D-GlcNAc-(1-&gt;4)-beta-D-GlcNAc)-L-asparaginyl-[protein] + UDP + H(+). It functions in the pathway protein modification; protein glycosylation. Its function is as follows. Recognizes glycoproteins with minor folding defects. Reglucosylates single N-glycans near the misfolded part of the protein, thus providing quality control for protein folding in the endoplasmic reticulum. Reglucosylated proteins are recognized by calreticulin for recycling to the endoplasmic reticulum and refolding or degradation. This chain is UDP-glucose:glycoprotein glucosyltransferase 1 (Uggt1), found in Mus musculus (Mouse).